Here is a 314-residue protein sequence, read N- to C-terminus: Ribosomal protein L11 methyltransferase (314 aa).

S-adenosyl-L-methionine is bound by residues Thr161, Gly182, Asp204, and Asn248.

It belongs to the methyltransferase superfamily. PrmA family.

It localises to the cytoplasm. The enzyme catalyses L-lysyl-[protein] + 3 S-adenosyl-L-methionine = N(6),N(6),N(6)-trimethyl-L-lysyl-[protein] + 3 S-adenosyl-L-homocysteine + 3 H(+). In terms of biological role, methylates ribosomal protein L11. This chain is Ribosomal protein L11 methyltransferase, found in Listeria monocytogenes serotype 1/2a (strain 10403S).